A 408-amino-acid chain; its full sequence is Acetylornithine aminotransferase (408 aa).

Residues 107 to 108 and F141 each bind pyridoxal 5'-phosphate; that span reads GT. Residue R144 participates in N(2)-acetyl-L-ornithine binding. 227 to 230 serves as a coordination point for pyridoxal 5'-phosphate; the sequence is DEIQ. At K256 the chain carries N6-(pyridoxal phosphate)lysine. Residue T284 participates in N(2)-acetyl-L-ornithine binding. T285 serves as a coordination point for pyridoxal 5'-phosphate.

It belongs to the class-III pyridoxal-phosphate-dependent aminotransferase family. ArgD subfamily. In terms of assembly, homodimer. Requires pyridoxal 5'-phosphate as cofactor.

The protein resides in the cytoplasm. It carries out the reaction N(2)-acetyl-L-ornithine + 2-oxoglutarate = N-acetyl-L-glutamate 5-semialdehyde + L-glutamate. It participates in amino-acid biosynthesis; L-arginine biosynthesis; N(2)-acetyl-L-ornithine from L-glutamate: step 4/4. The sequence is that of Acetylornithine aminotransferase from Xanthomonas axonopodis pv. citri (strain 306).